A 397-amino-acid chain; its full sequence is MVIKPRVRGFICVTAHPTGCEVNVKQQIDYVKAQGPFHGPKRVLVIGASTGYGLAARISAAFASGAATVGVFLERPGEGNKPGTAGWYNSAAFHKFAEAEGLYASSVNGDAFSDAVKQQTIDIIKRDLGQVDLVVYSLAAPRRTHPKTGQVYNSTLKPIGKTLRQRGLDTDKEVIKENVIEPATEEEIANTVAVMGGEDWQMWIEALDQAGVLADGAKTTAFTYLGEKITHDIYWNGTIGAAKKDLDQRVLKIREQLAARGGDARVAVLKALVTQASSAIPMMPLYLSLLFKVMKKAGTHEGCIEQVDGLYRDSLYNDHPIMDEEGRLRADYKELAPDIQAEVAALWDQVTDENLYELTDFKGYKSDFLRLFGFGVEGVDYEADVNPEVPIRNLTQV.

NAD(+)-binding positions include 47-52, 73-74, 110-111, and 138-139; these read GASTGY, LE, DA, and LA. Tyr224 provides a ligand contact to substrate. The Proton donor role is filled by Tyr234. NAD(+) contacts are provided by residues Lys243 and 272–274; that span reads LVT.

It belongs to the TER reductase family. As to quaternary structure, monomer.

It carries out the reaction a 2,3-saturated acyl-[ACP] + NAD(+) = a (2E)-enoyl-[ACP] + NADH + H(+). The protein operates within lipid metabolism; fatty acid biosynthesis. Its function is as follows. Involved in the final reduction of the elongation cycle of fatty acid synthesis (FAS II). Catalyzes the reduction of a carbon-carbon double bond in an enoyl moiety that is covalently linked to an acyl carrier protein (ACP). The protein is Enoyl-[acyl-carrier-protein] reductase [NADH] of Methylobacillus flagellatus (strain ATCC 51484 / DSM 6875 / VKM B-1610 / KT).